An 82-amino-acid polypeptide reads, in one-letter code: Protein C14 (82 aa).

This chain is Protein C14, found in Homo sapiens (Human).